Here is a 360-residue protein sequence, read N- to C-terminus: S-adenosylmethionine:tRNA ribosyltransferase-isomerase (360 aa).

The protein belongs to the QueA family. In terms of assembly, monomer.

Its subcellular location is the cytoplasm. The catalysed reaction is 7-aminomethyl-7-carbaguanosine(34) in tRNA + S-adenosyl-L-methionine = epoxyqueuosine(34) in tRNA + adenine + L-methionine + 2 H(+). It functions in the pathway tRNA modification; tRNA-queuosine biosynthesis. Functionally, transfers and isomerizes the ribose moiety from AdoMet to the 7-aminomethyl group of 7-deazaguanine (preQ1-tRNA) to give epoxyqueuosine (oQ-tRNA). This is S-adenosylmethionine:tRNA ribosyltransferase-isomerase from Nitrobacter winogradskyi (strain ATCC 25391 / DSM 10237 / CIP 104748 / NCIMB 11846 / Nb-255).